The sequence spans 35 residues: Tau-theraphotoxin-Pc1b (35 aa).

Intrachain disulfides connect C3–C17, C10–C22, and C16–C29. F35 is modified (phenylalanine amide).

This sequence belongs to the neurotoxin 10 (Hwtx-1) family. 62 (Vatx) subfamily. Expressed by the venom gland.

Its subcellular location is the secreted. In terms of biological role, selectively activates the mammalian capsaicin receptor TRPV1, a non-selective cation channel expressed by sensory neurons of the pain pathway. Is more potent than VaTx1, but less potent than VaTx3. Interacts with distinct regions of the channel than capsaicin, since it only acts on the extracellular face of the channel, and capsaicin binds to the cytosolic side. Also activates avian TRPV1, which is insensitive to capsaicin. Produce weak inhibition on potassium channels Kv2.1/KCNB1. This Psalmopoeus cambridgei (Trinidad chevron tarantula) protein is Tau-theraphotoxin-Pc1b.